Consider the following 304-residue polypeptide: Protease HtpX homolog (304 aa).

2 consecutive transmembrane segments (helical) span residues 14 to 34 (VFII…IGII) and 39 to 59 (YLNG…IMVM). Zn(2+) is bound at residue H144. E145 is a catalytic residue. H148 contacts Zn(2+). 2 consecutive transmembrane segments (helical) span residues 159–179 (IAIA…RLIF) and 202–222 (IIIY…ATAI). Zn(2+) is bound at residue E231. Residues 275–304 (SSPLKSKKDKPGLFDSHPPISSRIERLENM) are disordered.

Belongs to the peptidase M48B family. The cofactor is Zn(2+).

The protein localises to the cell membrane. This Listeria innocua serovar 6a (strain ATCC BAA-680 / CLIP 11262) protein is Protease HtpX homolog.